The sequence spans 699 residues: D-(-)-3-hydroxybutyrate oligomer hydrolase (699 aa).

Positions 1-33 (MTAIRGGSRRAPGLALALLGGVLLGACHGDENA) are cleaved as a signal peptide. Residue Ser311 is the Charge relay system of the active site.

The protein belongs to the D-(-)-3-hydroxybutyrate oligomer hydrolase family.

The protein localises to the secreted. The catalysed reaction is (3R)-hydroxybutanoate dimer + H2O = 2 (R)-3-hydroxybutanoate + H(+). It participates in lipid metabolism; butanoate metabolism. In terms of biological role, participates in the degradation of poly-3-hydroxybutyrate (PHB). It works downstream of poly(3-hydroxybutyrate) depolymerase, hydrolyzing D(-)-3-hydroxybutyrate oligomers of various length (3HB-oligomers) into 3HB-monomers. This Burkholderia mallei (strain ATCC 23344) protein is D-(-)-3-hydroxybutyrate oligomer hydrolase.